We begin with the raw amino-acid sequence, 386 residues long: Succinate--CoA ligase [ADP-forming] subunit beta (386 aa).

The ATP-grasp domain occupies 9-244 (KDLLASYDVP…PSQENVRDVL (236 aa)). Residues Lys46, 53-55 (GRG), Val102, and Glu107 each bind ATP. Residues Asn199 and Asp213 each contribute to the Mg(2+) site. Substrate is bound by residues Asn264 and 321–323 (GIM).

This sequence belongs to the succinate/malate CoA ligase beta subunit family. In terms of assembly, heterotetramer of two alpha and two beta subunits. Mg(2+) is required as a cofactor.

It carries out the reaction succinate + ATP + CoA = succinyl-CoA + ADP + phosphate. It catalyses the reaction GTP + succinate + CoA = succinyl-CoA + GDP + phosphate. The protein operates within carbohydrate metabolism; tricarboxylic acid cycle; succinate from succinyl-CoA (ligase route): step 1/1. In terms of biological role, succinyl-CoA synthetase functions in the citric acid cycle (TCA), coupling the hydrolysis of succinyl-CoA to the synthesis of either ATP or GTP and thus represents the only step of substrate-level phosphorylation in the TCA. The beta subunit provides nucleotide specificity of the enzyme and binds the substrate succinate, while the binding sites for coenzyme A and phosphate are found in the alpha subunit. The polypeptide is Succinate--CoA ligase [ADP-forming] subunit beta (Chlamydia pneumoniae (Chlamydophila pneumoniae)).